Reading from the N-terminus, the 278-residue chain is Aliphatic sulfonates import ATP-binding protein SsuB (278 aa).

In terms of domain architecture, ABC transporter spans 15–236 (LVLRDLSKRF…SQGDAAFAAL (222 aa)). 47-54 (GRSGCGKS) is an ATP binding site. Positions 251–264 (PERESFTHPNDGEP) are enriched in basic and acidic residues. The disordered stretch occupies residues 251 to 278 (PERESFTHPNDGEPRWPGVPAHGVRWAV).

It belongs to the ABC transporter superfamily. Aliphatic sulfonates importer (TC 3.A.1.17.2) family. As to quaternary structure, the complex is composed of two ATP-binding proteins (SsuB), two transmembrane proteins (SsuC) and a solute-binding protein (SsuA).

It localises to the cell inner membrane. It carries out the reaction ATP + H2O + aliphatic sulfonate-[sulfonate-binding protein]Side 1 = ADP + phosphate + aliphatic sulfonateSide 2 + [sulfonate-binding protein]Side 1.. Part of the ABC transporter complex SsuABC involved in aliphatic sulfonates import. Responsible for energy coupling to the transport system. This Albidiferax ferrireducens (strain ATCC BAA-621 / DSM 15236 / T118) (Rhodoferax ferrireducens) protein is Aliphatic sulfonates import ATP-binding protein SsuB.